A 546-amino-acid chain; its full sequence is Chaperonin GroEL 1 (546 aa).

ATP-binding positions include 30 to 33 (TLGP), lysine 51, 87 to 91 (DGTTT), glycine 415, 479 to 481 (NAA), and aspartate 495. The disordered stretch occupies residues 526–546 (KEDAPMPGGMPGGMGGMGMDM). Gly residues predominate over residues 534-546 (GMPGGMGGMGMDM).

This sequence belongs to the chaperonin (HSP60) family. In terms of assembly, forms a cylinder of 14 subunits composed of two heptameric rings stacked back-to-back. Interacts with the co-chaperonin GroES.

The protein localises to the cytoplasm. The enzyme catalyses ATP + H2O + a folded polypeptide = ADP + phosphate + an unfolded polypeptide.. Together with its co-chaperonin GroES, plays an essential role in assisting protein folding. The GroEL-GroES system forms a nano-cage that allows encapsulation of the non-native substrate proteins and provides a physical environment optimized to promote and accelerate protein folding. The chain is Chaperonin GroEL 1 from Burkholderia ambifaria (strain ATCC BAA-244 / DSM 16087 / CCUG 44356 / LMG 19182 / AMMD) (Burkholderia cepacia (strain AMMD)).